We begin with the raw amino-acid sequence, 339 residues long: DNA-directed RNA polymerase subunit alpha (339 aa).

Residues methionine 1–glutamate 233 are alpha N-terminal domain (alpha-NTD). Positions glycine 266–phenylalanine 339 are alpha C-terminal domain (alpha-CTD).

This sequence belongs to the RNA polymerase alpha chain family. In plastids the minimal PEP RNA polymerase catalytic core is composed of four subunits: alpha, beta, beta', and beta''. When a (nuclear-encoded) sigma factor is associated with the core the holoenzyme is formed, which can initiate transcription.

Its subcellular location is the plastid. The protein localises to the chloroplast. The catalysed reaction is RNA(n) + a ribonucleoside 5'-triphosphate = RNA(n+1) + diphosphate. DNA-dependent RNA polymerase catalyzes the transcription of DNA into RNA using the four ribonucleoside triphosphates as substrates. The chain is DNA-directed RNA polymerase subunit alpha from Elymus canadensis (Canada wild rye).